Here is a 957-residue protein sequence, read N- to C-terminus: Glycine dehydrogenase (decarboxylating) (957 aa).

N6-(pyridoxal phosphate)lysine is present on lysine 708.

The protein belongs to the GcvP family. As to quaternary structure, the glycine cleavage system is composed of four proteins: P, T, L and H. The cofactor is pyridoxal 5'-phosphate.

It catalyses the reaction N(6)-[(R)-lipoyl]-L-lysyl-[glycine-cleavage complex H protein] + glycine + H(+) = N(6)-[(R)-S(8)-aminomethyldihydrolipoyl]-L-lysyl-[glycine-cleavage complex H protein] + CO2. In terms of biological role, the glycine cleavage system catalyzes the degradation of glycine. The P protein binds the alpha-amino group of glycine through its pyridoxal phosphate cofactor; CO(2) is released and the remaining methylamine moiety is then transferred to the lipoamide cofactor of the H protein. The protein is Glycine dehydrogenase (decarboxylating) of Klebsiella pneumoniae (strain 342).